The primary structure comprises 185 residues: Ubiquitin-conjugating enzyme E2 2 (185 aa).

The region spanning 4–150 (PSKKRLIRDF…VKATVEASWL (147 aa)) is the UBC core domain. The Glycyl thioester intermediate role is filled by Cys88. Residues 149 to 173 (WLDDGEMPESIEEDDEAEAEAEAEA) are compositionally biased toward acidic residues. The disordered stretch occupies residues 149-185 (WLDDGEMPESIEEDDEAEAEAEAEATVDRSAPQTASA).

Belongs to the ubiquitin-conjugating enzyme family.

Its subcellular location is the cytoplasm. It localises to the nucleus. It carries out the reaction S-ubiquitinyl-[E1 ubiquitin-activating enzyme]-L-cysteine + [E2 ubiquitin-conjugating enzyme]-L-cysteine = [E1 ubiquitin-activating enzyme]-L-cysteine + S-ubiquitinyl-[E2 ubiquitin-conjugating enzyme]-L-cysteine.. Its pathway is protein modification; protein ubiquitination. Its function is as follows. Catalyzes the covalent attachment of ubiquitin to other proteins. Plays a role in transcription regulation by catalyzing the monoubiquitination of histone H2B to form H2BK123ub1. H2BK123ub1 gives a specific tag for epigenetic transcriptional activation and is also a prerequisite for H3K4me and H3K79me formation. Also involved in postreplication repair of UV-damaged DNA, in N-end rule-dependent protein degradation and in sporulation. This chain is Ubiquitin-conjugating enzyme E2 2 (UBC2), found in Mycosarcoma maydis (Corn smut fungus).